The following is a 582-amino-acid chain: Hemagglutinin-neuraminidase (582 aa).

Residues 35 to 55 (ILVLSVQAVTLILVIVNLGEL) form a helical membrane-spanning segment. 3 disulfides stabilise this stretch: Cys178/Cys202, Cys192/Cys253, and Cys244/Cys257. N-linked (GlcNAc...) asparagine; by host glycosylation is found at Asn284 and Asn329. 3 cysteine pairs are disulfide-bonded: Cys350-Cys471, Cys382-Cys392, and Cys465-Cys475. N-linked (GlcNAc...) asparagine; by host glycosylation is found at Asn400 and Asn448. Asn507 carries N-linked (GlcNAc...) asparagine; by host glycosylation. A disulfide bridge links Cys545 with Cys556.

Belongs to the paramyxoviruses hemagglutinin-neuraminidase family. In terms of assembly, homotetramer; composed of disulfide-linked homodimers. Interacts with F protein trimer.

Its subcellular location is the virion membrane. It is found in the host cell membrane. The catalysed reaction is Hydrolysis of alpha-(2-&gt;3)-, alpha-(2-&gt;6)-, alpha-(2-&gt;8)- glycosidic linkages of terminal sialic acid residues in oligosaccharides, glycoproteins, glycolipids, colominic acid and synthetic substrates.. Its function is as follows. Attaches the virus to alpha-2,3-linked sialic acid-containing cell receptors and thereby initiating infection. Binding of HN protein to the receptor induces a conformational change that allows the F protein to trigger virion/cell membranes fusion. Binds to the glycan motifs sialyl Lewis (SLe) and GM2 ganglioside (GM2-glycan). Neuraminidase activity ensures the efficient spread of the virus by dissociating the mature virions from the neuraminic acid containing glycoproteins. This chain is Hemagglutinin-neuraminidase (HN), found in Homo sapiens (Human).